A 345-amino-acid chain; its full sequence is Protein phosphatase 1 regulatory subunit 7 (345 aa).

A disordered region spans residues 1–53 (MATLSVGEPQEMEVDRRGESEESGDDETKRKSLNGEVDSLQAPSTVPEESPVD). Basic and acidic residues predominate over residues 13–30 (EVDRRGESEESGDDETKR). 11 LRR repeats span residues 62–83 (EEEDVDLVHCRIGKIEGLEVLL), 84–105 (KAKTISLRQNLIKRIENLESLV), 106–127 (SLRELDLYDNQIRKLENLQALT), 128–149 (ELEQLDVSFNLLRKIEGLDSLT), 150–171 (KVKKLFLLHNKIASIANLDHLT), 172–193 (SLQMLELGSNRIRVIENLDSLS), 194–215 (SLESLFLGTNKITQLQNLDGLH), 216–237 (NLTVLSIQSNRITKLEGLQNLV), 238–259 (NLRELYLSHNGIEVMEGLENNK), 260–281 (KLSTLDIAANRIKKIENISHLT), and 282–303 (DLKEFWMNDNQIENWADLDELK). The LRRCT domain occupies 316 to 345 (NPLQKDPQYRRKIMLALPSVRQIDATFIRF).

This sequence belongs to the SDS22 family.

It localises to the nucleus. Functionally, regulatory subunit of protein phosphatase 1. The protein is Protein phosphatase 1 regulatory subunit 7 (ppp1r7) of Danio rerio (Zebrafish).